The primary structure comprises 472 residues: H(+)/Cl(-) exchange transporter ClcA (472 aa).

The Cytoplasmic segment spans residues 1-32; it reads MKAETPSFEAHQFVRVRRGDAVRRLIQRDKTP. The helical transmembrane segment at 33–69 threads the bilayer; it reads LAVLLMAAVVGTLAGLVGVAFEKSVNWVQNQRIGALA. The Periplasmic portion of the chain corresponds to 70 to 76; sequence QVADHWY. Residues 77–100 traverse the membrane as a helical segment; that stretch reads LVWPLAFILSALLAMVGYFLVRRF. The short motif at 106-110 is the Selectivity filter part_1 element; sequence GSGIP. Residue S107 coordinates chloride. The segment at residues 109–116 is an intramembrane region (helical); it reads IPEIEGAL. Over 117-123 the chain is Cytoplasmic; sequence EELRPVR. The next 2 membrane-spanning stretches (helical) occupy residues 124–141 and 148–166; these read WWRV…TLGA and EGPM…LDIF. Residues 146–150 carry the Selectivity filter part_2 motif; the sequence is GREGP. Over 167-176 the chain is Cytoplasmic; sequence RMRSPEARHT. 2 intramembrane regions (helical) span residues 177-189 and 193-201; these read LLAT…LSAA and PLAGILFII. Topologically, residues 202–214 are cytoplasmic; that stretch reads EEMRPQFRYNLIS. Residues 215–232 traverse the membrane as a helical segment; the sequence is IKAVFTGVIMSSIVFRIF. Residues 233–252 are Periplasmic-facing; sequence NGEAAIIEVGKLSNAPVNTL. The helical transmembrane segment at 253 to 281 threads the bilayer; that stretch reads WLYLVLGMLFGCFGPLFNFLVLRTQDIFQ. Residues 282 to 287 lie on the Cytoplasmic side of the membrane; sequence RIHGGN. A helical transmembrane segment spans residues 288 to 309; sequence IKTWVLMGGVIGGICGLLGLMQ. At 310-329 the chain is on the periplasmic side; it reads PSAVGGGFNLIPIAAAGNFS. The next 2 membrane-spanning stretches (helical) occupy residues 330 to 349 and 355 to 376; these read VGLL…ICFS and GIFA…MAAI. The Selectivity filter part_3 motif lies at 355-359; it reads GIFAP. Positions 356 and 357 each coordinate chloride. The Periplasmic segment spans residues 377-386; that stretch reads PLFPAYHLDA. The helical intramembrane region spans 387 to 401; it reads GTFAIAGMGALLAAS. The note=Loop between two helices intramembrane region spans 402 to 404; sequence VRA. The segment at residues 405-416 is an intramembrane region (helical); that stretch reads PLTGIVLVLEMT. Residues 417-421 constitute an intramembrane region (note=Loop between two helices); sequence DNYQL. A helical transmembrane segment spans residues 422 to 438; the sequence is ILPMIITCLGATLLAQF. At 439–472 the chain is on the cytoplasmic side; sequence LGGKPLYSTILQRTLAKQEAEQAAKAQQAPRENT. Chloride is bound at residue Y445.

It belongs to the chloride channel (TC 2.A.49) family. ClcA subfamily. As to quaternary structure, homodimer.

The protein resides in the cell inner membrane. It catalyses the reaction 2 chloride(in) + H(+)(out) = 2 chloride(out) + H(+)(in). Functionally, proton-coupled chloride transporter. Functions as antiport system and exchanges two chloride ions for 1 proton. Probably acts as an electrical shunt for an outwardly-directed proton pump that is linked to amino acid decarboxylation, as part of the extreme acid resistance (XAR) response. The chain is H(+)/Cl(-) exchange transporter ClcA from Klebsiella pneumoniae (strain 342).